A 542-amino-acid chain; its full sequence is MIKTIKTTPYQDQKPGTSGLRKKVPVFAQENYAENFIQSIFDALEGFEGQTLVIGGDGRYYNREVIQKAIKMAAAAGFGKVLVGQGGILSTPAASNVIRKYKAFGGIVLSASHNPGGPTEDFGIKYNIGNGGPAPEKITDAIYARSKVIDSYKISDAADIDLDKIGSFKVDELTVDVIDPVADYAALMEELFDFGAIRSLIAGGFKVVVDSMSAVTGPYAVEILEKRLGAPKGSVRNATPLPDFGGHHPDPNLVHAKELYDDVMSPEGPDFGAASDGDGDRNMVVGKGMFVTPSDSLAIIAANAKLAPGYAAGISGIARSMPTSAAADRVAEKLGLGMYETPTGWKFFGNLMDAGKVTICGEESFGTGSNHVREKDGLWAVLYWLNIVAARKESVKDIVTKHWAEYGRNYYSRHDYEEVDSDAANTLVAILREKLATLPGTSYGNLKVAAADDFAYHDPVDQSVSKNQGIRILFEGGSRIVLRLSGTGTAGATLRLYVERYEPDAARHGIETQSALADLISVADTIAGIKAHTADSEPTVIT.

Substrate-binding positions include threonine 17, arginine 21, 112–113, and lysine 125; that span reads SH. Catalysis depends on serine 112, which acts as the Phosphoserine intermediate. Residue serine 112 participates in Mg(2+) binding. Residues aspartate 276, aspartate 278, and aspartate 280 each coordinate Mg(2+). Residues 280 to 281, threonine 343, 362 to 364, lysine 375, and arginine 495 contribute to the substrate site; these read DR and EES.

The protein belongs to the phosphohexose mutase family. Mg(2+) is required as a cofactor.

It catalyses the reaction alpha-D-glucose 1-phosphate = alpha-D-glucose 6-phosphate. In terms of biological role, this enzyme participates in both the breakdown and synthesis of glucose. Required for the synthesis of capsular polysaccharide and normal lipopolysaccharide. This chain is Phosphoglucomutase (pgm), found in Rhizobium radiobacter (Agrobacterium tumefaciens).